A 282-amino-acid chain; its full sequence is Armadillo repeat-containing protein 1 (282 aa).

Met-1 is modified (N-acetylmethionine). An ARM repeat occupies 39–81 (GCLPGLILSMDHPNPPVVHSALLALRYLAECRANREKMKGELG). Residue Thr-137 is modified to Phosphothreonine. A phosphoserine mark is found at Ser-189, Ser-246, Ser-260, and Ser-267. A disordered region spans residues 239–261 (DYLPEDESPTKEQDKAVSRVGSH). Residues 246–255 (SPTKEQDKAV) show a composition bias toward basic and acidic residues.

In terms of assembly, interacts with mitochondrial contact site and cristae organizing system (MICOS) complex components IMMT/MIC60 and MICOS10/MIC10. Interacts with mitochondrial outer membrane sorting assembly machinery (SAM) complex components SAMM50 and MTX1.

It localises to the cytoplasm. The protein localises to the mitochondrion. Its subcellular location is the mitochondrion outer membrane. In association with mitochondrial contact site and cristae organizing system (MICOS) complex components and mitochondrial outer membrane sorting assembly machinery (SAM) complex components may regulate mitochondrial dynamics playing a role in determining mitochondrial length, distribution and motility. The polypeptide is Armadillo repeat-containing protein 1 (ARMC1) (Pongo abelii (Sumatran orangutan)).